The primary structure comprises 271 residues: Regulatory protein RecX (271 aa).

Belongs to the RecX family.

The protein resides in the cytoplasm. Functionally, modulates RecA activity. This chain is Regulatory protein RecX, found in Geobacillus sp. (strain WCH70).